The chain runs to 1958 residues: Echinoderm microtubule-associated protein-like 6 (1958 aa).

WD repeat units follow at residues 59–100, 104–145, 148–187, 195–233, 235–273, 280–321, 323–362, 364–403, 406–445, and 561–601; these read GHND…TVSL, VHTH…LLAS, GHSD…LTAK, GDLQ…RTIQ, AHSA…TKID, GYKG…LILQ, HCEG…LIAR, NMEE…EVVH, DRKE…KKIG, and GHSA…VSNG. A disordered region spans residues 603–626; the sequence is LETAPQEGGADSYSEESDSDLSDV. Over residues 615–626 the composition is skewed to acidic residues; sequence YSEESDSDLSDV. 10 WD repeats span residues 725–766, 770–811, 814–853, 861–900, 901–940, 996–1035, 1038–1077, 1080–1120, 1191–1230, and 1236–1276; these read GHDD…CLSL, QHQR…KIAT, GHKD…FTSK, GKLE…KTVK, AHDG…KTYA, HMEG…RMLA, KLKK…DMVS, HRKE…RVGI, SDIT…QHAR, and GHSA…TQES. The segment covering 1322 to 1337 has biased composition (basic and acidic residues); it reads KPHQQLKEVSVEERPP. The segment at 1322–1353 is disordered; the sequence is KPHQQLKEVSVEERPPVSRAAPQPEKLQKNNI. WD repeat units lie at residues 1412–1456, 1460–1501, 1504–1543, 1553–1591, 1593–1638, 1685–1724, 1726–1767, 1768–1807, 1880–1919, and 1925–1958; these read EHTD…TLSM, FHSK…KVAS, GHLE…LLYK, AKMQ…RLVA, AHTG…CRAF, HMEG…LLNK, SLGH…GKKR, DRKS…NLNR, ADKA…KFAK, and GHSA…WRCL.

It belongs to the WD repeat EMAP family.

It is found in the cytoplasm. It localises to the cytoskeleton. Its function is as follows. May modify the assembly dynamics of microtubules, such that microtubules are slightly longer, but more dynamic. In Homo sapiens (Human), this protein is Echinoderm microtubule-associated protein-like 6 (EML6).